The following is a 913-amino-acid chain: Cadherin-4 (913 aa).

The signal sequence occupies residues 1 to 20 (MTTGSVLPLLLLGLSGALRA). Positions 21 to 166 (HREDLTVREA…SSGGLRRQKR (146 aa)) are excised as a propeptide. Asn146 carries an N-linked (GlcNAc...) asparagine glycan. 5 Cadherin domains span residues 167–274 (DWVI…RPEF), 275–389 (INQV…PPEF), 390–504 (TTST…APYF), 505–610 (PSNH…DNAP), and 611–721 (QLLP…TVGA). Residues 167–731 (DWVIPPINVP…VAAAGLGTGA (565 aa)) lie on the Extracellular side of the membrane. N-linked (GlcNAc...) asparagine glycosylation is found at Asn280, Asn409, Asn554, Asn629, Asn658, and Asn699. A helical transmembrane segment spans residues 732–753 (IVAILICIVILLIMVLLFVVWM). The Cytoplasmic portion of the chain corresponds to 754-913 (KRREKERHTK…ADMYGGGEED (160 aa)).

Distributed widely in mouse tissues with high levels present in brain, skeletal muscle and thymus.

The protein resides in the cell membrane. Functionally, cadherins are calcium-dependent cell adhesion proteins. They preferentially interact with themselves in a homophilic manner in connecting cells; cadherins may thus contribute to the sorting of heterogeneous cell types. May play an important role in retinal development. This Mus musculus (Mouse) protein is Cadherin-4 (Cdh4).